We begin with the raw amino-acid sequence, 213 residues long: Ras-related protein Rab-25 (213 aa).

GTP contacts are provided by S21, G24, K25, T26, N27, S38, H39, T43, and T44. T26 is a binding site for Mg(2+). 2 consecutive short sequence motifs (switch) follow at residues 35–49 and 67–84; these read NEFSHDSRTTIGVEF and DTAGLERYRAITSAYYRG. Positions 44 and 67 each coordinate Mg(2+). 6 residues coordinate GTP: G70, N125, K126, D128, A156, and L157. S-geranylgeranyl cysteine attachment occurs at residues C209 and C210. C210 is subject to Cysteine methyl ester. Residues 211-213 constitute a propeptide, removed in mature form; the sequence is ISL.

This sequence belongs to the small GTPase superfamily. Rab family. Interacts (GTP-bound form) with RAB11FIP1, RAB11FIP2, RAB11FIP3 and RAB11FIP4. Interacts (via the hypervariable C-terminal region) with ITGB1 (via the cytoplasmic region); the interaction is GTP-dependent. Interacts with ITGAV. Associates with the integrin alpha-V/beta-1 heterodimer. Interacts with VPS33B. It depends on Mg(2+) as a cofactor.

It is found in the cell membrane. Its subcellular location is the cell projection. The protein resides in the pseudopodium membrane. It localises to the cytoplasmic vesicle. The enzyme catalyses GTP + H2O = GDP + phosphate + H(+). Regulated by guanine nucleotide exchange factors (GEFs) which promote the exchange of bound GDP for free GTP. Regulated by GTPase activating proteins (GAPs) which increase the GTP hydrolysis activity. Inhibited by GDP dissociation inhibitors (GDIs) which prevent Rab-GDP dissociation. The small GTPases Rab are key regulators of intracellular membrane trafficking, from the formation of transport vesicles to their fusion with membranes. Rabs cycle between an inactive GDP-bound form and an active GTP-bound form that is able to recruit to membranes different set of downstream effectors directly responsible for vesicle formation, movement, tethering and fusion. RAB25 regulates epithelial cell differentiation, proliferation and survival, thereby playing key roles in tumorigenesis. Promotes invasive migration of cells in which it functions to localize and maintain integrin alpha-V/beta-1 at the tips of extending pseudopodia. Involved in the regulation of epithelial morphogenesis through the control of CLDN4 expression and localization at tight junctions. May selectively regulate the apical recycling pathway. Together with MYO5B regulates transcytosis. This chain is Ras-related protein Rab-25 (RAB25), found in Bos taurus (Bovine).